Here is a 921-residue protein sequence, read N- to C-terminus: Phototropin-1B (921 aa).

A compositionally biased stretch (gly residues) spans 1–11 (MASKGTEGGHG). Disordered stretches follow at residues 1-59 (MASK…SPFL) and 88-118 (TGLP…QSAA). Residues 40 to 51 (SSASSFRTAAAA) show a composition bias toward low complexity. Positions 97-117 (RPSSGSARTSSEDNPQQQQSA) are enriched in polar residues. Positions 123-197 (VSEELRAALS…KIRQSLANGS (75 aa)) constitute a PAS 1 domain. FMN-binding positions include 172–177 (NCRFLQ), arginine 190, asparagine 205, asparagine 215, and glutamine 236. Cysteine 173 carries the post-translational modification S-4a-FMN cysteine. Residues 197-251 (SNYCGRILNYKKDGTPFWNLLTIAPIKDEDGRLLKFIGMQVEVSKYTEGKKDTVV) enclose the PAC 1 domain. A compositionally biased stretch (polar residues) spans 286–295 (RSLSESSNNT). Disordered stretches follow at residues 286-345 (RSLS…QVNR) and 366-391 (EKNM…SFED). Basic and acidic residues-rich tracts occupy residues 312-321 (PSKRSSESGS) and 366-376 (EKNMLKPRDED). The region spanning 400 to 473 (RGIDLATTLE…RKIRDAIDNQ (74 aa)) is the PAS 2 domain. Residues 449-454 (NCRFLQ), arginine 467, asparagine 482, asparagine 492, and glutamine 513 each bind FMN. Position 450 is an S-4a-FMN cysteine (cysteine 450). Residues 474–528 (AEVTVQLINYTKSGKKFWNLFHLQPMRDQKGDVQYFIGVQLDGTEHVQDDAAKEG) enclose the PAC 2 domain. A Protein kinase domain is found at 594–881 (FRPVKPLGSG…ANEIKGHPFF (288 aa)). ATP-binding positions include 600 to 608 (LGSGDTGSV) and lysine 623. The Proton acceptor role is filled by aspartate 719.

This sequence belongs to the protein kinase superfamily. Ser/Thr protein kinase family. Homodimer. The cofactor is FMN. In terms of processing, autophosphorylated in response to blue light irradiation. 2 molecules of FMN bind covalently to cysteines after exposure to blue light and are reversed in the dark.

It catalyses the reaction L-seryl-[protein] + ATP = O-phospho-L-seryl-[protein] + ADP + H(+). The enzyme catalyses L-threonyl-[protein] + ATP = O-phospho-L-threonyl-[protein] + ADP + H(+). Protein kinase that acts as a blue light photoreceptor in a signal-transduction pathway for phototropic responses. Regulates a wide range of physiological activities in plants that maximize the efficiency of photosynthesis, such as chloroplast relocations, stomata opening, and leaf expansion. This Oryza sativa subsp. japonica (Rice) protein is Phototropin-1B (PHOT1B).